A 490-amino-acid polypeptide reads, in one-letter code: Gram-negative bacteria-binding protein 3 (490 aa).

Positions 1 to 25 (MADALRFVAWSCCLQLLFLLLGVQG) are cleaved as a signal peptide. Positions 26–126 (YEVPKAKIDV…GSFVVNGYSG (101 aa)) constitute a CBM39 domain. Positions 162 to 490 (TEVNGAPTRC…KIDYVKVYSL (329 aa)) constitute a GH16 domain. N-linked (GlcNAc...) asparagine glycosylation is found at Asn-362 and Asn-373.

It belongs to the insect beta-1,3-glucan binding protein family.

The protein resides in the secreted. Involved in the recognition of invading microorganisms. Binds specifically to beta-1,3-glucan and activates the phenoloxidase cascade. The sequence is that of Gram-negative bacteria-binding protein 3 from Drosophila melanogaster (Fruit fly).